The chain runs to 320 residues: Ferrochelatase (320 aa).

Residues His194 and Glu275 each contribute to the Fe cation site.

Belongs to the ferrochelatase family. As to quaternary structure, monomer.

The protein localises to the cytoplasm. The enzyme catalyses heme b + 2 H(+) = protoporphyrin IX + Fe(2+). The protein operates within porphyrin-containing compound metabolism; protoheme biosynthesis; protoheme from protoporphyrin-IX: step 1/1. In terms of biological role, catalyzes the ferrous insertion into protoporphyrin IX. This is Ferrochelatase from Escherichia coli O157:H7 (strain EC4115 / EHEC).